Here is a 382-residue protein sequence, read N- to C-terminus: MYQILIVLFLFALLYIVVWPFYQAFYHINHAQQDYNMTLTDRMDYIEAVMRRRQYVPMEALPVVRFDTNLGTLAGETLRCMSVPLYVSEIDLPMFDCGEVCEDPNAVYFFVGEGDTYVVNGHKLAVGGYCTTNSVPRDCNRETSVVLMSLNQWTCIAEDPRYFAGTGNMTQLAGRQHFDRILPGQSGRNVLFDRLLGREVNVATNTFRRSWDELLEDGSRRFEMRCNARDNNNNLMFVNPRNPLECLPNVCTDVNYVHSTVRPVFESGECDCGDEAVTRVRHVVPGDRTSMCASIVDGFDTNTASHRFRVECVNTHTPIDRFSSDKLLCPSDTFDSNTDAAFAFEVPGSYPLSGNGLDEPTHRVFLDTRSRVQYNDVRGALT.

This is an uncharacterized protein from Orgyia pseudotsugata multicapsid polyhedrosis virus (OpMNPV).